The chain runs to 316 residues: Protein FLUORESCENT IN BLUE LIGHT, chloroplastic (316 aa).

Residues 1–26 (MAALIRCCSSFSHTSGGQPPPRDKSR) constitute a chloroplast transit peptide. A helical transmembrane segment spans residues 125–145 (MFSMPILLLVALIGATVGGLL). Residues 144-175 (LLARQRKGELQRLNEQLRQINAALRRQAKIES) are a coiled coil. TPR repeat units lie at residues 203-236 (LISK…AQSL), 243-276 (KKAA…SKRE), and 283-316 (TEAY…LETD).

Part of the FLU-containing chloroplast membrane complex composed of FLU, CRD1, PORB, PORC, CHLP and HEMA1. Interacts with HEMA1 (via C-terminus) only in the absence of light. No interaction with HEMA2.

It is found in the plastid. The protein localises to the chloroplast membrane. Its subcellular location is the chloroplast thylakoid membrane. In terms of biological role, negative regulator of tetrapyrrole biosynthesis (including chlorophyll) in chloroplasts, probably via HEMA1 repression. Inhibits especially the magnesium ion Mg(2+) branch of tetrapyrrole biosynthesis, but independently of heme. The chain is Protein FLUORESCENT IN BLUE LIGHT, chloroplastic (FLU) from Arabidopsis thaliana (Mouse-ear cress).